Reading from the N-terminus, the 88-residue chain is Small ribosomal subunit protein bS16c (88 aa).

Belongs to the bacterial ribosomal protein bS16 family.

The protein resides in the plastid. It localises to the chloroplast. This Citrus sinensis (Sweet orange) protein is Small ribosomal subunit protein bS16c.